Consider the following 255-residue polypeptide: Epoxyqueuosine reductase QueH (255 aa).

The [4Fe-4S] cluster site is built by cysteine 44, cysteine 45, cysteine 128, and cysteine 131. Cysteine 210 and cysteine 212 are oxidised to a cystine.

Belongs to the QueH family.

The enzyme catalyses epoxyqueuosine(34) in tRNA + AH2 = queuosine(34) in tRNA + A + H2O. Its pathway is tRNA modification; tRNA-queuosine biosynthesis. Catalyzes the conversion of epoxyqueuosine (oQ) to queuosine (Q), which is a hypermodified base found in the wobble positions of tRNA(Asp), tRNA(Asn), tRNA(His) and tRNA(Tyr). This is Epoxyqueuosine reductase QueH from Streptococcus pyogenes serotype M1.